Reading from the N-terminus, the 307-residue chain is UAP56-interacting factor (307 aa).

Positions 1-25 are enriched in low complexity; that stretch reads MSGFGAAALLSGSSAAAGTRSGSSD. Disordered stretches follow at residues 1-28 and 41-85; these read MSGFGAAALLSGSSAAAGTRSGSSDSLE and NKKE…KNHL. Residues 26–44 carry the UAP56-binding motif motif; the sequence is SLEKIDMSLDDIIKLNKKE. Over residues 57 to 78 the composition is skewed to polar residues; sequence LQQNRTQQFRTPGSKWGIQQQK.

It belongs to the UIF family. As to expression, widely expressed.

The protein localises to the nucleus. Its subcellular location is the nucleoplasm. It localises to the nucleus speckle. Its function is as follows. Required for mRNA export from the nucleus to the cytoplasm. Acts as an adapter that uses the DDX39B/UAP56-NFX1 pathway to ensure efficient mRNA export and delivering to the nuclear pore. This is UAP56-interacting factor (FYTTD1) from Gallus gallus (Chicken).